The primary structure comprises 338 residues: DNA-directed RNA polymerase subunit alpha (338 aa).

The interval 1 to 226 (MLIAQRPTLS…ELFGLARELN (226 aa)) is alpha N-terminal domain (alpha-NTD). Residues 240-338 (DEQLAADLAL…DDAFVEDEQY (99 aa)) form an alpha C-terminal domain (alpha-CTD) region.

This sequence belongs to the RNA polymerase alpha chain family. In terms of assembly, homodimer. The RNAP catalytic core consists of 2 alpha, 1 beta, 1 beta' and 1 omega subunit. When a sigma factor is associated with the core the holoenzyme is formed, which can initiate transcription.

It catalyses the reaction RNA(n) + a ribonucleoside 5'-triphosphate = RNA(n+1) + diphosphate. Its function is as follows. DNA-dependent RNA polymerase catalyzes the transcription of DNA into RNA using the four ribonucleoside triphosphates as substrates. This is DNA-directed RNA polymerase subunit alpha from Nocardioides sp. (strain ATCC BAA-499 / JS614).